Consider the following 934-residue polypeptide: Coiled-coil domain-containing protein 39 (934 aa).

Coiled coils occupy residues 17 to 133, 164 to 512, 540 to 615, and 664 to 826; these read IPVA…DGLK, SQQD…HNDL, VDRS…SQIR, and VIKA…EQDI. The tract at residues 866 to 934 is disordered; the sequence is LPTAKGPSSR…NIPKGKKLNK (69 aa). Low complexity predominate over residues 873–892; the sequence is SSRSSSQSSLSSIRSLEDSI. Phosphoserine is present on residues Ser-887 and Ser-895. Positions 912-925 are enriched in low complexity; it reads RSDSSRSSSGSNSN.

The protein belongs to the CCDC39 family.

The protein localises to the cytoplasm. It is found in the cytoskeleton. The protein resides in the cilium axoneme. Its function is as follows. Required for assembly of dynein regulatory complex (DRC) and inner dynein arm (IDA) complexes, which are responsible for ciliary beat regulation, thereby playing a central role in motility in cilia and flagella. Probably acts together with CCDC40 to form a molecular ruler that determines the 96 nanometer (nm) repeat length and arrangements of components in cilia and flagella. Not required for outer dynein arm complexes assembly. In Rattus norvegicus (Rat), this protein is Coiled-coil domain-containing protein 39 (Ccdc39).